The sequence spans 146 residues: D-aminoacyl-tRNA deacylase (146 aa).

Positions 137-138 (GP) match the Gly-cisPro motif, important for rejection of L-amino acids motif.

Belongs to the DTD family. In terms of assembly, homodimer.

Its subcellular location is the cytoplasm. It catalyses the reaction glycyl-tRNA(Ala) + H2O = tRNA(Ala) + glycine + H(+). It carries out the reaction a D-aminoacyl-tRNA + H2O = a tRNA + a D-alpha-amino acid + H(+). Its function is as follows. An aminoacyl-tRNA editing enzyme that deacylates mischarged D-aminoacyl-tRNAs. Also deacylates mischarged glycyl-tRNA(Ala), protecting cells against glycine mischarging by AlaRS. Acts via tRNA-based rather than protein-based catalysis; rejects L-amino acids rather than detecting D-amino acids in the active site. By recycling D-aminoacyl-tRNA to D-amino acids and free tRNA molecules, this enzyme counteracts the toxicity associated with the formation of D-aminoacyl-tRNA entities in vivo and helps enforce protein L-homochirality. The chain is D-aminoacyl-tRNA deacylase from Bacillus mycoides (strain KBAB4) (Bacillus weihenstephanensis).